The following is a 187-amino-acid chain: Probable chorismate pyruvate-lyase (187 aa).

3 residues coordinate substrate: R76, L114, and E173.

The protein belongs to the UbiC family.

It is found in the cytoplasm. The enzyme catalyses chorismate = 4-hydroxybenzoate + pyruvate. Its pathway is cofactor biosynthesis; ubiquinone biosynthesis. In terms of biological role, removes the pyruvyl group from chorismate, with concomitant aromatization of the ring, to provide 4-hydroxybenzoate (4HB) for the ubiquinone pathway. The chain is Probable chorismate pyruvate-lyase from Shewanella amazonensis (strain ATCC BAA-1098 / SB2B).